The primary structure comprises 126 residues: Holo-[acyl-carrier-protein] synthase (126 aa).

Mg(2+) contacts are provided by D9 and E58.

Belongs to the P-Pant transferase superfamily. AcpS family. Requires Mg(2+) as cofactor.

It localises to the cytoplasm. The catalysed reaction is apo-[ACP] + CoA = holo-[ACP] + adenosine 3',5'-bisphosphate + H(+). Transfers the 4'-phosphopantetheine moiety from coenzyme A to a Ser of acyl-carrier-protein. This is Holo-[acyl-carrier-protein] synthase from Yersinia pseudotuberculosis serotype I (strain IP32953).